The following is a 1620-amino-acid chain: Myb-like protein X (1620 aa).

The span at Met1–Asn13 shows a compositional bias: polar residues. Disordered regions lie at residues Met1 to Thr57, Thr176 to Gly204, Phe294 to Glu318, and Lys450 to Ala849. Low complexity predominate over residues Pro28 to Thr57. A compositionally biased stretch (gly residues) spans Gly177 to Gly187. The region spanning Gly310–Asn421 is the SWIRM domain. Residues Lys450–Lys497 are compositionally biased toward basic and acidic residues. Acidic residues predominate over residues Glu498–Glu511. Residues Lys512–Thr568 are compositionally biased toward basic and acidic residues. Over residues Asp570–Ser598 the composition is skewed to low complexity. A compositionally biased stretch (basic and acidic residues) spans Lys606 to Lys628. Low complexity predominate over residues Glu629 to Ser645. Basic and acidic residues predominate over residues Glu647–Asn798. The span at Glu799–Asp834 shows a compositional bias: acidic residues. Residues Pro925 to Glu977 enclose the SANT domain. The segment at Gln1049–Thr1506 is disordered. Composition is skewed to basic and acidic residues over residues Ser1051–Asp1195, Glu1219–Asn1255, and His1264–Leu1302. A compositionally biased stretch (low complexity) spans Asn1303–Asn1325. The span at Thr1338–Asp1350 shows a compositional bias: polar residues. Low complexity-rich tracts occupy residues Thr1358 to Thr1382 and Asn1390 to Asn1416. Composition is skewed to acidic residues over residues Glu1467–Leu1481 and Val1493–Met1504.

It is found in the nucleus. This Dictyostelium discoideum (Social amoeba) protein is Myb-like protein X (mybX).